We begin with the raw amino-acid sequence, 173 residues long: Dirigent protein 8 (173 aa).

A signal peptide spans 1 to 22 (MTNLILIFAAQILLFYAVASVG). N-linked (GlcNAc...) asparagine glycosylation is found at N69, N90, and N125.

The protein belongs to the plant dirigent protein family. Homodimer.

It is found in the secreted. It localises to the extracellular space. Its subcellular location is the apoplast. In terms of biological role, dirigent proteins impart stereoselectivity on the phenoxy radical-coupling reaction, yielding optically active lignans from two molecules of coniferyl alcohol in the biosynthesis of lignans, flavonolignans, and alkaloids and thus plays a central role in plant secondary metabolism. This is Dirigent protein 8 (DIR8) from Arabidopsis thaliana (Mouse-ear cress).